The following is a 382-amino-acid chain: Proton extrusion protein PxcA (382 aa).

4 consecutive transmembrane segments (helical) span residues 156-176 (TLISLKVLLLLILVPLLVQQV), 257-277 (AVKNVIADLAATVAFVVVCVF), 305-325 (IILFTDIFVGFHSPEGWTVLL), and 340-360 (FILLFIATFPVILATIFKYWI).

Belongs to the CemA family.

It is found in the cell inner membrane. Its function is as follows. Required for H(+) efflux immediately after light irradiation to form a rapid H(+) concentration gradient across the thylakoid membranes. Together with PxcL, contributes to transient H(+) uptake following dark to light transition. In Synechococcus sp. (strain WH7803), this protein is Proton extrusion protein PxcA.